Consider the following 312-residue polypeptide: Short chain dehydrogenase pgmD (312 aa).

The NADP(+) site is built by Val-46, Ile-47, Lys-171, Tyr-207, Lys-211, and Thr-242. Tyr-207 serves as the catalytic Proton donor. Lys-211 acts as the Lowers pKa of active site Tyr in catalysis.

Belongs to the short-chain dehydrogenases/reductases (SDR) family.

The protein operates within pigment biosynthesis. It participates in secondary metabolite biosynthesis. Its function is as follows. Short chain dehydrogenase; part of the gene cluster that mediates the biosynthesis of pleosporalin A, ascomycone A, as well as a third cryptic naphthoquinone derived pigment, all responsible for the coloration of conidia. Essential for the production of pleosporalin A, but not the 2 other final products. The pathway begins with the biosynthesis of the cyclized heptaketide 3-acetonyl-1,6,8-trihydroxy-2-naphthaldehyde by the NR-PKS pgmA. The C-6 hydroxyl group is further methylated by the O-methyltransferase pgmB to yield fusarubinaldehyde which is in turn oxidized by the cytochrome P450 monooxygenase pgmC at C-9. The C-1 hydroxyl group is then methylated spontaneously. Although pgmE, pgmD and pgmH are essential for the production of pleosporalin A, it is not the case for the 2 other final products and it remains difficult to assign a specific function to each enzyme. PgmF and pgmG seem not to be involved in pigment biosynthesis although they were regulated by the cluster-specific transcription factor pgmR. This chain is Short chain dehydrogenase pgmD, found in Aspergillus terreus.